A 192-amino-acid chain; its full sequence is Ribosome maturation factor RimP (192 aa).

It belongs to the RimP family.

It localises to the cytoplasm. Required for maturation of 30S ribosomal subunits. This Mycobacterium sp. (strain JLS) protein is Ribosome maturation factor RimP.